Reading from the N-terminus, the 350-residue chain is Melatonin receptor type 1A-A (350 aa).

At 1 to 29 (MFMNGSSLNSSALDPSEQALQRPPWVTTT) the chain is on the extracellular side. Residues Asn-4 and Asn-9 are each glycosylated (N-linked (GlcNAc...) asparagine). The chain crosses the membrane as a helical span at residues 30 to 50 (LGCFLIFTIVVDILGNLLVIF). The Cytoplasmic segment spans residues 51–63 (SVYRNKKLQNAGN). A helical membrane pass occupies residues 64–84 (IFVVSLAVADLVVAIYPYPLV). Residues 85-101 (LTSIFHRGWNLGYMHCQ) lie on the Extracellular side of the membrane. A disulfide bond links Cys-100 and Cys-177. Residues 102-122 (ISGFLMGVSVIGSIFNITGIA) form a helical membrane-spanning segment. The Cytoplasmic portion of the chain corresponds to 123 to 144 (INCYCYICHSLKYDKLYSDKNS). A helical transmembrane segment spans residues 145 to 165 (VCYVLLIWALTVLAIVPNLFV). The Extracellular segment spans residues 166-187 (GSLQYDPRVYSCTFEQSASSAY). The helical transmembrane segment at 188-208 (TIAVVFFHFILPIMIVTYCYL) threads the bilayer. Topologically, residues 209 to 240 (RIWVLVIQVRRRVKNDNRPKITPHDVRNFVTM) are cytoplasmic. A helical transmembrane segment spans residues 241–261 (FVVFVLFAVCWAPLNFIGLAV). At 262 to 267 (AISPER) the chain is on the extracellular side. The chain crosses the membrane as a helical span at residues 268 to 288 (VVPLIPEWLFVASYFMAYFNS). The Cytoplasmic portion of the chain corresponds to 289-350 (CLNAIVYGVL…NNNQVKVDSV (62 aa)).

The protein belongs to the G-protein coupled receptor 1 family.

The protein localises to the cell membrane. In terms of biological role, high affinity receptor for melatonin. The activity of this receptor is mediated by pertussis toxin sensitive G proteins that inhibits adenylate cyclase activity. The sequence is that of Melatonin receptor type 1A-A (mtnr1aa) from Danio rerio (Zebrafish).